A 78-amino-acid polypeptide reads, in one-letter code: Putative membrane protein insertion efficiency factor (78 aa).

It belongs to the UPF0161 family.

It localises to the cell membrane. In terms of biological role, could be involved in insertion of integral membrane proteins into the membrane. The polypeptide is Putative membrane protein insertion efficiency factor (Bacillus mycoides (strain KBAB4) (Bacillus weihenstephanensis)).